The chain runs to 263 residues: tRNA1(Val) (adenine(37)-N6)-methyltransferase (263 aa).

Belongs to the methyltransferase superfamily. tRNA (adenine-N(6)-)-methyltransferase family.

The protein resides in the cytoplasm. The catalysed reaction is adenosine(37) in tRNA1(Val) + S-adenosyl-L-methionine = N(6)-methyladenosine(37) in tRNA1(Val) + S-adenosyl-L-homocysteine + H(+). Functionally, specifically methylates the adenine in position 37 of tRNA(1)(Val) (anticodon cmo5UAC). This chain is tRNA1(Val) (adenine(37)-N6)-methyltransferase, found in Pseudoalteromonas atlantica (strain T6c / ATCC BAA-1087).